The following is a 316-amino-acid chain: MNKFKNIAVYGGGSFGTSLASLVARNCNNVTLFLRDEIILKEILYKKTNAQYLGDIELPTNLQATTNLSVIKDFELIIIAVPSYAFDDSIKLLKTYGISKEHTILVATKGLADNPTELFSDRLNTLLPDNPIGFLSGPNLAKELAKNLPASASIASLDIDIANKIAYNFSSKTFSTNTTIDIVTLQIAGALKNIFAIKSGIDLAREQGANSRATLIVGALKEITTLSKVLGGMQKNSDILLEAGVLGDLVLTCYSLGSRNTKFGYEFEISRDKKKFLCEYKELVEGREALKLVLDLIKKYNLHMPIVAEVASLILI.

4 residues coordinate NADPH: Ser14, Phe15, Arg35, and Lys109. 2 residues coordinate sn-glycerol 3-phosphate: Lys109 and Gly137. Position 141 (Ala141) interacts with NADPH. Sn-glycerol 3-phosphate-binding residues include Lys192, Asp248, Ser258, Arg259, and Asn260. The active-site Proton acceptor is the Lys192. Position 259 (Arg259) interacts with NADPH. Residues Leu283 and Glu285 each contribute to the NADPH site.

This sequence belongs to the NAD-dependent glycerol-3-phosphate dehydrogenase family.

Its subcellular location is the cytoplasm. The catalysed reaction is sn-glycerol 3-phosphate + NAD(+) = dihydroxyacetone phosphate + NADH + H(+). It carries out the reaction sn-glycerol 3-phosphate + NADP(+) = dihydroxyacetone phosphate + NADPH + H(+). Its pathway is membrane lipid metabolism; glycerophospholipid metabolism. Catalyzes the reduction of the glycolytic intermediate dihydroxyacetone phosphate (DHAP) to sn-glycerol 3-phosphate (G3P), the key precursor for phospholipid synthesis. In Rickettsia prowazekii (strain Madrid E), this protein is Glycerol-3-phosphate dehydrogenase [NAD(P)+].